A 343-amino-acid polypeptide reads, in one-letter code: Ribosomal RNA small subunit methyltransferase C (343 aa).

The protein belongs to the methyltransferase superfamily. RsmC family. As to quaternary structure, monomer.

The protein resides in the cytoplasm. It catalyses the reaction guanosine(1207) in 16S rRNA + S-adenosyl-L-methionine = N(2)-methylguanosine(1207) in 16S rRNA + S-adenosyl-L-homocysteine + H(+). In terms of biological role, specifically methylates the guanine in position 1207 of 16S rRNA in the 30S particle. The chain is Ribosomal RNA small subunit methyltransferase C from Escherichia coli O8 (strain IAI1).